We begin with the raw amino-acid sequence, 149 residues long: Hydroalkoxylation enzyme phnH (149 aa).

A signal peptide spans 1 to 18 (MKFTYLVSLAAFAVTALG). Residues N33 and N127 are each glycosylated (N-linked (GlcNAc...) asparagine).

Homotetramer.

It catalyses the reaction 2,4,7,9-tetrahydroxy-6-methyl-8-(2-methylbut-3-en-2-yl)-1-oxo-1H-phenalen-3-ol = (2'R)-atrovenetin. The protein operates within secondary metabolite biosynthesis. In terms of biological role, hydroalkoxylation enzyme; part of the gene cluster that mediates the biosynthesis of phenalenones such as herqueinone, compounds that have been reported to treat tumors, bacterial infections and/or mycoses, and rheumatic diseases. The non-reducing polyketide synthase phnA synthesizes the heptaketide backbone and cyclizes it into the angular, hemiketal-containing naphtho-gamma-pyrone prephenalenone. The product template (PT) domain of phnA catalyzes only the C4-C9 aldol condensation, which is unprecedented among known PT domains. The transformation of prephenalenone to phenalenones requires an FAD-dependent monooxygenase phnB, which catalyzes the C2 aromatic hydroxylation of prephenalenone and ring opening of the gamma-pyrone ring simultaneously. Subsequent intramolecular deprotonation of C3 phenolic oxygen accelerates phenalenone ring closure to yield the tricyclic phenalenone core with a C2 hydroxylation. The prenyltransferase phnF further catalyzes reverse C-prenylation of phenalenone by direct electrophilic substitution at C6, or possibly via first a forward O-prenylation of a neighboring phenol in phenalenone, followed by a Claisen rearrangement. The hydroalkoxylation enzyme phnH catalyzes the 5-exo-trig cyclization via acid catalysis after the spontaneous deprotonation of 7-OH, which leads to the formation of the dihydrobenzofuran atrovenetin. Atrovenetin is further converted to deoxyherqueinone by the O-methyltransferase phnC which can methylate C2-OH to stabilize the northern portion of the phenalenone core. Finally, the oxidoreductase phnG converts deoxyherqueinone to herqueinone via C6 hydroxylation. In Penicillium herquei, this protein is Hydroalkoxylation enzyme phnH.